We begin with the raw amino-acid sequence, 346 residues long: Phosphoribosylformylglycinamidine cyclo-ligase (346 aa).

This sequence belongs to the AIR synthase family.

Its subcellular location is the cytoplasm. It carries out the reaction 2-formamido-N(1)-(5-O-phospho-beta-D-ribosyl)acetamidine + ATP = 5-amino-1-(5-phospho-beta-D-ribosyl)imidazole + ADP + phosphate + H(+). Its pathway is purine metabolism; IMP biosynthesis via de novo pathway; 5-amino-1-(5-phospho-D-ribosyl)imidazole from N(2)-formyl-N(1)-(5-phospho-D-ribosyl)glycinamide: step 2/2. In Bacillus cereus (strain ATCC 10987 / NRS 248), this protein is Phosphoribosylformylglycinamidine cyclo-ligase.